Reading from the N-terminus, the 228-residue chain is Chromatin remodeling protein SHL (228 aa).

The BAH domain maps to 21–137 (KSIQEGDAVL…STTGAFDPDR (117 aa)). The PHD-type zinc finger occupies 139-190 (TVFCKCEMPYNPDDLMVQCEECSEWFHPSCIGTTIEEAKKPDNFYCEECSPQ). Residues 191–203 (QQNLHNSNSTSNN) are compositionally biased toward polar residues. The tract at residues 191–228 (QQNLHNSNSTSNNRDAKVNGKRSLEVTKSKNKHTKRPG) is disordered. Positions 204 to 218 (RDAKVNGKRSLEVTK) are enriched in basic and acidic residues. A Nuclear localization signal motif is present at residues 210-217 (GKRSLEVT). The segment covering 219 to 228 (SKNKHTKRPG) has biased composition (basic residues).

Belongs to the SHL1/EBS protein family. Recognizes di- and trimethylated histone H3 at lysine 4. Interacts with HDA6. Interacts with DEK3. Expressed ubiquitously. Mostly expressed in roots, stems, leaves and flowers, and, to a lower extent, in siliques.

The protein localises to the nucleus. Functionally, chromatin remodeling factor that binds to methylated histone (e.g. H3K4me2/3) to prevent their acetylation (e.g. H3K9K14Ac), likely by recruiting histone deacetylase (HDAC) complexes, and thus regulate the transcription of target genes. Required during development and for fertility, probably by modulating developmental gene expression. Promotes development speed, but at fitness cost. Involved in the chromatin-mediated repression of floral initiation and controls genes regulating flowering. Negatively regulates the expression of the floral integrator SOC1, by preventing high levels of H3 acetylation, thus maintaining an inactive chromatin conformation. The polypeptide is Chromatin remodeling protein SHL (Arabidopsis thaliana (Mouse-ear cress)).